A 610-amino-acid polypeptide reads, in one-letter code: Autophagy-related protein 22-1 (610 aa).

Residues 1-11 show a composition bias toward pro residues; that stretch reads MAFTPSSPPSP. Residues 1-29 form a disordered region; sequence MAFTPSSPPSPAADASQRPSRYPGEDTTP. A helical membrane pass occupies residues 35–55; that stretch reads ILGWYAYGIAAEVFAVCGVGS. The N-linked (GlcNAc...) asparagine glycan is linked to Asn90. A run of 3 helical transmembrane segments spans residues 120–140, 152–171, and 189–209; these read SFAMYTFSLAVLVQALTLISF, TLLLAFGFIGSATSMLFVFV, and CLGSSFVVLNSFLPVLVANDP. The tract at residues 229–265 is disordered; the sequence is GQFEPRDSFSERNPEFESQYTPGIGLGSKPSTNATSP. Positions 232–243 are enriched in basic and acidic residues; sequence EPRDSFSERNPE. Asn261 carries an N-linked (GlcNAc...) asparagine glycan. 8 helical membrane passes run 278 to 298, 310 to 330, 384 to 404, 418 to 438, 453 to 473, 488 to 510, 522 to 544, and 553 to 573; these read VGLGYCAAVLVQILSIGLLFA, TLPLRFVLLLVGIWWFSFTMV, VFLVAWFLLSDAIATVSGTAI, VGCLSITATLSGMTGAFLWPV, LCIALFEIIPLYGMLAYIPLF, FPLAIVHGIVSGGLSSYCRSFFG, YALYAATDKGSSVIGPAIVGMLI, and GFFFIAILIVLPIPLVWMVNA. Positions 588–610 are disordered; the sequence is AKGQESETGEPGEEAEGLLARGA. Over residues 594-603 the composition is skewed to acidic residues; that stretch reads ETGEPGEEAE.

Belongs to the ATG22 family.

The protein resides in the vacuole membrane. Its function is as follows. Vacuolar effluxer which mediate the efflux of amino acids resulting from autophagic degradation. The release of autophagic amino acids allows the maintenance of protein synthesis and viability during nitrogen starvation. This is Autophagy-related protein 22-1 (atg22-1) from Aspergillus terreus (strain NIH 2624 / FGSC A1156).